A 184-amino-acid polypeptide reads, in one-letter code: Dynactin subunit 6 (184 aa).

This sequence belongs to the dynactin subunits 5/6 family. Dynactin subunit 6 subfamily. Subunit of dynactin, a multiprotein complex part of a tripartite complex with dynein and a adapter, such as BICDL1, BICD2 or HOOK3. The dynactin complex is built around ACTR1A/ACTB filament and consists of an actin-related filament composed of a shoulder domain, a pointed end and a barbed end.

It is found in the cytoplasm. Its subcellular location is the cytoskeleton. In terms of biological role, part of the dynactin complex that activates the molecular motor dynein for ultra-processive transport along microtubules. The polypeptide is Dynactin subunit 6 (dctn6) (Nematostella vectensis (Starlet sea anemone)).